The primary structure comprises 376 residues: Protein-glutamate methylesterase/protein-glutamine glutaminase 1 (376 aa).

The region spanning 4-121 is the Response regulatory domain; sequence KVLVVDDSSF…ARNRDEAVSL (118 aa). At Asp-55 the chain carries 4-aspartylphosphate. Residues 138 to 169 are disordered; it reads RPVASSTPVQERPQSTLNRPTTGLRREASAQA. The segment covering 141 to 158 has biased composition (polar residues); that stretch reads ASSTPVQERPQSTLNRPT. The CheB-type methylesterase domain occupies 183 to 376; the sequence is SGKKYQLTAI…ERMLVEVGLA (194 aa). Catalysis depends on residues Ser-195, His-222, and Asp-318.

The protein belongs to the CheB family. In terms of processing, phosphorylated by CheA. Phosphorylation of the N-terminal regulatory domain activates the methylesterase activity.

The protein resides in the cytoplasm. The enzyme catalyses [protein]-L-glutamate 5-O-methyl ester + H2O = L-glutamyl-[protein] + methanol + H(+). It carries out the reaction L-glutaminyl-[protein] + H2O = L-glutamyl-[protein] + NH4(+). In terms of biological role, involved in chemotaxis. Part of a chemotaxis signal transduction system that modulates chemotaxis in response to various stimuli. Catalyzes the demethylation of specific methylglutamate residues introduced into the chemoreceptors (methyl-accepting chemotaxis proteins or MCP) by CheR. Also mediates the irreversible deamidation of specific glutamine residues to glutamic acid. The sequence is that of Protein-glutamate methylesterase/protein-glutamine glutaminase 1 from Vibrio vulnificus (strain YJ016).